A 229-amino-acid chain; its full sequence is Synaptogyrin-3 (229 aa).

At M1 the chain carries N-acetylmethionine. The MARVEL domain maps to 20-172 (FARRPQTLLR…LTVKALQRFR (153 aa)). The next 4 helical transmembrane spans lie at 30–50 (VASW…GYVN), 70–90 (FGVA…LLDV), 105–125 (VLLD…GFCF), and 148–168 (AVIT…VKAL).

Belongs to the synaptogyrin family. Interacts (via N-terminus) with SLC6A3 (via N-terminus). May interact with VMAT2.

Its subcellular location is the cytoplasmic vesicle. The protein resides in the secretory vesicle. It localises to the synaptic vesicle membrane. The protein localises to the synapse. Functionally, may play a role in regulated exocytosis. May indirectly regulate the activity of the plasma membrane dopamine transporter SLC6A3 and thereby regulate dopamine transport back from the synaptic cleft into the presynaptic terminal. The protein is Synaptogyrin-3 of Bos taurus (Bovine).